Consider the following 2070-residue polypeptide: HEAT repeat-containing protein 5B (2070 aa).

HEAT repeat units follow at residues 848–885, 1062–1099, and 1290–1327; these read EVRK…VVGE, VNLS…REAA, and LHLS…KFAS. Serine 1737 bears the Phosphoserine mark.

Belongs to the HEATR5 family. As to quaternary structure, self-associates. Component of the aftiphilin/p200/gamma-synergin complex, at least composed of AFTPH/aftiphilin, HEATR5B/p200a and SYNRG/gamma-synergin, which plays a role in the AP1G1/AP-1-mediated protein trafficking from early to recycling endosomes and between the trans-Golgi network (TGN) and endosomes. Within the complex interacts with AFTPH/aftiphilin and SYNRG/gamma-synergin; the interactions are direct. Interacts with GGA1.

It is found in the cytoplasm. The protein localises to the perinuclear region. It localises to the cytoplasmic vesicle. The protein resides in the clathrin-coated vesicle. Component of clathrin-coated vesicles. Component of the aftiphilin/p200/gamma-synergin complex, which plays roles in AP1G1/AP-1-mediated protein trafficking including the trafficking of transferrin from early to recycling endosomes, and the membrane trafficking of furin and the lysosomal enzyme cathepsin D between the trans-Golgi network (TGN) and endosomes. In Mus musculus (Mouse), this protein is HEAT repeat-containing protein 5B (Heatr5b).